A 321-amino-acid chain; its full sequence is MIFLTLEHILTHISFSVVSIVIIIHFLTLLVNEFVGLYDSSEKGMLTTFFCLTGLLITRWIYSGHLPISDLYESLIFLSWIFSIIHMVPYFKKHKNYLSTITAPSTFFTQGFATWGLLTDMHQSKILVPALQSQWLIMHVSMMVSGYAALLCGSLLSAALLVITFRKVIRIVGKNNNLLNDSFPVDEIQYMMEKKSILKNTFFPSSRNYYRFQLIQQLDHWGFRILSIGFLFLTIGILSGAVWANEAWGSYWNWDPKETWAFITWTIFAIYFHTRTNKNLEGLNSAIVASIGFLIIWICYFGVNLLGIGLHSYGSFTLISN.

The next 8 membrane-spanning stretches (helical) occupy residues 17-37 (VVSIVIIIHFLTLLVNEFVGL), 48-68 (TFFCLTGLLITRWIYSGHLPI), 71-91 (LYESLIFLSWIFSIIHMVPYF), 98-118 (LSTITAPSTFFTQGFATWGLL), 143-163 (MVSGYAALLCGSLLSAALLVI), 225-245 (ILSIGFLFLTIGILSGAVWAN), 259-273 (TWAFITWTIFAIYFH), and 286-306 (AIVASIGFLIIWICYFGVNLL).

The protein belongs to the CcmF/CycK/Ccl1/NrfE/CcsA family. May interact with Ccs1.

It is found in the plastid. It localises to the chloroplast thylakoid membrane. In terms of biological role, required during biogenesis of c-type cytochromes (cytochrome c6 and cytochrome f) at the step of heme attachment. The chain is Cytochrome c biogenesis protein CcsA from Populus trichocarpa (Western balsam poplar).